The following is a 302-amino-acid chain: Methionyl-tRNA formyltransferase (302 aa).

Residue 107–110 (SLLP) participates in (6S)-5,6,7,8-tetrahydrofolate binding.

Belongs to the Fmt family.

It carries out the reaction L-methionyl-tRNA(fMet) + (6R)-10-formyltetrahydrofolate = N-formyl-L-methionyl-tRNA(fMet) + (6S)-5,6,7,8-tetrahydrofolate + H(+). In terms of biological role, attaches a formyl group to the free amino group of methionyl-tRNA(fMet). The formyl group appears to play a dual role in the initiator identity of N-formylmethionyl-tRNA by promoting its recognition by IF2 and preventing the misappropriation of this tRNA by the elongation apparatus. The polypeptide is Methionyl-tRNA formyltransferase (Leifsonia xyli subsp. xyli (strain CTCB07)).